A 304-amino-acid chain; its full sequence is Non-specific ribonucleoside hydrolase RihC (304 aa).

H233 is a catalytic residue.

Belongs to the IUNH family. RihC subfamily.

In terms of biological role, hydrolyzes both purine and pyrimidine ribonucleosides with a broad-substrate specificity. The protein is Non-specific ribonucleoside hydrolase RihC of Shigella boydii serotype 4 (strain Sb227).